Reading from the N-terminus, the 107-residue chain is Nucleoid-associated protein Oant_0022 (107 aa).

The protein belongs to the YbaB/EbfC family. Homodimer.

The protein localises to the cytoplasm. Its subcellular location is the nucleoid. In terms of biological role, binds to DNA and alters its conformation. May be involved in regulation of gene expression, nucleoid organization and DNA protection. This is Nucleoid-associated protein Oant_0022 from Brucella anthropi (strain ATCC 49188 / DSM 6882 / CCUG 24695 / JCM 21032 / LMG 3331 / NBRC 15819 / NCTC 12168 / Alc 37) (Ochrobactrum anthropi).